The sequence spans 323 residues: MQVTFLGTSSGVPTRARNVSAVALRLPQRSELWLFDCGEGTQHQFLRSDLRLSQLRRVFITHMHGDHVFGLPGLLASLGLSGSSAGVDLYGPDPLDAYLHGVLRTSSTRIGYPLAVHPVRGAAESGRIVFEDDDLQVRATPLHHRVPAYAYRVDQKPRAGRFDVAKARDLNIPPGPVYAALKRGETVTLDDGRRIDGHALCGPPRRGASVVYCTDTVFCEAAVELARGADLLIHESTFSHAEAEMAFQRQHSTSTMAAQTAAEAGVSQLVLTHLSPRYAPGNAVTANDLLAEAQAIFPATVLAKDFLSIDVTPQTDPSCCNSS.

His-62, His-64, Asp-66, His-67, His-144, Asp-215, and His-273 together coordinate Zn(2+). Residue Asp-66 is the Proton acceptor of the active site.

Belongs to the RNase Z family. Homodimer. It depends on Zn(2+) as a cofactor.

It carries out the reaction Endonucleolytic cleavage of RNA, removing extra 3' nucleotides from tRNA precursor, generating 3' termini of tRNAs. A 3'-hydroxy group is left at the tRNA terminus and a 5'-phosphoryl group is left at the trailer molecule.. Zinc phosphodiesterase, which displays some tRNA 3'-processing endonuclease activity. Probably involved in tRNA maturation, by removing a 3'-trailer from precursor tRNA. The polypeptide is Ribonuclease Z (Synechococcus sp. (strain WH7803)).